The sequence spans 119 residues: Large ribosomal subunit protein bL20 (119 aa).

This sequence belongs to the bacterial ribosomal protein bL20 family.

Its function is as follows. Binds directly to 23S ribosomal RNA and is necessary for the in vitro assembly process of the 50S ribosomal subunit. It is not involved in the protein synthesizing functions of that subunit. The chain is Large ribosomal subunit protein bL20 from Acidithiobacillus ferrooxidans (strain ATCC 23270 / DSM 14882 / CIP 104768 / NCIMB 8455) (Ferrobacillus ferrooxidans (strain ATCC 23270)).